The primary structure comprises 758 residues: Zinc finger protein VAR3, chloroplastic (758 aa).

Positions 122 to 502 (FPGFPDELLR…PKEETQIGLI (381 aa)) are 3 X approximate repeat. RanBP2-type zinc fingers lie at residues 276 to 305 (KRGD…ARPK) and 308 to 338 (LTGS…KRPR). Repeat 1 spans residues 368 to 415 (RWLSKVAQGGSDANSVDTDEDFPEIMPLRKGVNRYVVSTRKPPLERRL). Disordered regions lie at residues 410-470 (PLER…RFES), 512-545 (GGNQ…SEEP), 572-606 (EKMP…DSDF), 629-654 (TLPA…INKS), and 727-758 (KRKT…KGDK). Basic and acidic residues-rich tracts occupy residues 457-469 (RSDD…RRFE), 519-545 (QEDK…SEEP), and 572-581 (EKMPMRKGEN). Repeat 2 spans residues 547-596 (RWFKRVTELHNVSDLESAIPQEISPEKMPMRKGENRFVVSRKKDRSLTSP). Repeat 3 spans residues 688–736 (RWFKRVAEIKNISELSEIPDEDFPSIMPMRKGVNRFVVSKRKTPLERRL).

As to quaternary structure, interacts in vitro with the chloroplast-located protein CCD4/NCED4. Homodimer. Interacts with ORRM1. Interacts with PCMP-H51/CRR28 and PCMP-H12/OTP82. Interacts with ORRM6. As to expression, weakly expressed in leaves and roots.

It localises to the plastid. Its subcellular location is the chloroplast. In terms of biological role, probable component of some protein complex required for chloroplast and palisade cell development. Involved in C-to-U editing of chloroplastic RNA. Controls a large number of chloroplastic editing sites. Binds the editing recognition trans-factors PCMP-H51/CRR28 and PCMP-H12/OTP82. The protein is Zinc finger protein VAR3, chloroplastic of Arabidopsis thaliana (Mouse-ear cress).